Here is a 496-residue protein sequence, read N- to C-terminus: GTPase Der (496 aa).

EngA-type G domains lie at 3–166 (PVVA…FDNL) and 208–381 (IKLA…RSAT). GTP-binding positions include 9 to 16 (GRPNVGKS), 56 to 60 (DTGGI), 118 to 121 (NKVD), 214 to 221 (GRPNVGKS), 261 to 265 (DTAGV), and 326 to 329 (NKWD). In terms of domain architecture, KH-like spans 382–466 (TRVGTSVLTR…PIRIQFQNSD (85 aa)).

This sequence belongs to the TRAFAC class TrmE-Era-EngA-EngB-Septin-like GTPase superfamily. EngA (Der) GTPase family. In terms of assembly, associates with the 50S ribosomal subunit.

In terms of biological role, GTPase that plays an essential role in the late steps of ribosome biogenesis. The sequence is that of GTPase Der from Vibrio vulnificus (strain CMCP6).